We begin with the raw amino-acid sequence, 279 residues long: HTH-type transcriptional regulator HdfR (279 aa).

The HTH lysR-type domain occupies 1 to 58 (MDTELLKTFLEVSRTRHFGRAAESLYLTQSAVSFRIRQLENQLGVNLFTRHRNNIRLT). Residues 18 to 37 (FGRAAESLYLTQSAVSFRIR) constitute a DNA-binding region (H-T-H motif).

Belongs to the LysR transcriptional regulatory family.

Its function is as follows. Negatively regulates the transcription of the flagellar master operon flhDC by binding to the upstream region of the operon. The sequence is that of HTH-type transcriptional regulator HdfR from Shigella boydii serotype 18 (strain CDC 3083-94 / BS512).